A 291-amino-acid chain; its full sequence is Nucleoid occlusion protein (291 aa).

A DNA-binding region (H-T-H motif) is located at residues 155–174 (EALAQRLGKGQSTVANKLRL).

It belongs to the ParB family.

It is found in the cytoplasm. It localises to the nucleoid. Effects nucleoid occlusion by binding relatively nonspecifically to DNA and preventing the assembly of the division machinery in the vicinity of the nucleoid, especially under conditions that disturb the cell cycle. It helps to coordinate cell division and chromosome segregation by preventing the formation of the Z ring through the nucleoid, which would cause chromosome breakage. This Bacillus pumilus (strain SAFR-032) protein is Nucleoid occlusion protein.